Here is a 152-residue protein sequence, read N- to C-terminus: Protein ripply3 (152 aa).

The span at 1–24 shows a compositional bias: basic and acidic residues; that stretch reads MRPEAAGVREARGRLCHCPGDDPG. Disordered regions lie at residues 1–76 and 113–152; these read MRPE…GAFG and FYND…ERAE. Positions 40–43 match the WRPW motif motif; sequence WRPW. The ripply homology domain stretch occupies residues 79 to 114; that stretch reads HPVRLYLPVSKRQEYLQSSGEKVLASFPVQATIHFY. A compositionally biased stretch (acidic residues) spans 116 to 130; that stretch reads DDSESGSEEEQEEEA. Positions 140-152 are enriched in basic and acidic residues; sequence AEVRDSAQEERAE.

The protein belongs to the ripply family. As to quaternary structure, interacts with TBX1.

The protein resides in the nucleus. Functionally, acts as a transcriptional corepressor. Negative regulator of the transcriptional activity of TBX1. Plays a role in the development of the pharyngeal apparatus and derivatives. The polypeptide is Protein ripply3 (Ripply3) (Mus musculus (Mouse)).